We begin with the raw amino-acid sequence, 552 residues long: Putative E3 ubiquitin-protein ligase ARI6 (552 aa).

The TRIAD supradomain stretch occupies residues 129-343 (REFTCGICFE…GGYYACNRYE (215 aa)). The Zn(2+) site is built by Cys-133, Cys-136, Cys-150, His-152, Cys-155, Cys-158, Cys-178, Cys-183, Cys-222, Cys-227, Cys-245, Cys-247, Cys-252, Cys-255, His-260, Cys-265, Cys-292, and Cys-295. The RING-type 1 zinc-finger motif lies at 133 to 183 (CGICFESYPLEETISVSCGHPFCATCWTGYISTSINDGPGCLMLKCPYPCC). An IBR-type zinc finger spans residues 202–265 (ERYYRYFLRS…SEEAHRPVDC (64 aa)). The segment at 292–322 (CPKCKRPIEKNHGCMHMTCTPPCKFEFCWLC) adopts an RING-type 2; atypical zinc-finger fold. Cys-305 is an active-site residue. The Zn(2+) site is built by Cys-310, Cys-314, Cys-319, Cys-322, His-329, and Cys-339. The segment at 518-552 (HAASSKPANCKPSSNTKDGGKGKKEALTMAGSAET) is disordered. Residues 519-534 (AASSKPANCKPSSNTK) are compositionally biased toward polar residues.

This sequence belongs to the RBR family. Ariadne subfamily. Zn(2+) is required as a cofactor.

It catalyses the reaction [E2 ubiquitin-conjugating enzyme]-S-ubiquitinyl-L-cysteine + [acceptor protein]-L-lysine = [E2 ubiquitin-conjugating enzyme]-L-cysteine + [acceptor protein]-N(6)-ubiquitinyl-L-lysine.. The protein operates within protein modification; protein ubiquitination. In terms of biological role, might act as an E3 ubiquitin-protein ligase, or as part of E3 complex, which accepts ubiquitin from specific E2 ubiquitin-conjugating enzymes and then transfers it to substrates. The sequence is that of Putative E3 ubiquitin-protein ligase ARI6 (ARI6) from Arabidopsis thaliana (Mouse-ear cress).